We begin with the raw amino-acid sequence, 290 residues long: Protease HtpX (290 aa).

A run of 2 helical transmembrane segments spans residues 6–26 (LFLV…NILF) and 36–56 (ISGL…ISLL). Residue histidine 143 coordinates Zn(2+). Glutamate 144 is a catalytic residue. Histidine 147 serves as a coordination point for Zn(2+). Helical transmembrane passes span 158 to 178 (LIQG…AGVI) and 200 to 220 (ITVF…VMWF). A Zn(2+)-binding site is contributed by glutamate 225.

It belongs to the peptidase M48B family. Zn(2+) serves as cofactor.

The protein localises to the cell inner membrane. The sequence is that of Protease HtpX from Aeromonas hydrophila subsp. hydrophila (strain ATCC 7966 / DSM 30187 / BCRC 13018 / CCUG 14551 / JCM 1027 / KCTC 2358 / NCIMB 9240 / NCTC 8049).